The chain runs to 622 residues: Mitochondrial Rho GTPase 2 (622 aa).

Over 1 to 596 the chain is Cytoplasmic; sequence MRRDVRILLL…ELHPTPFWLR (596 aa). Residues 2 to 168 form the Miro 1 domain; it reads RRDVRILLLG…FYYAQKAVLH (167 aa). GTP contacts are provided by G16, K17, T18, and S19. Position 18 (T18) interacts with Mg(2+). D57 provides a ligand contact to Mg(2+). Residue S59 coordinates GTP. K96 participates in a covalent cross-link: Glycyl lysine isopeptide (Lys-Gly) (interchain with G-Cter in ubiquitin). GTP-binding residues include N118, K119, D121, A149, and K150. Residue K119 forms a Glycyl lysine isopeptide (Lys-Gly) (interchain with G-Cter in ubiquitin) linkage. A Glycyl lysine isopeptide (Lys-Gly) (interchain with G-Cter in ubiquitin) cross-link involves residue K164. EF-hand domains follow at residues 184-219 and 304-339; these read ACAQ…CFGH and RGYQ…FSVA. Residues D197, D199, D201, E208, D317, D319, D321, and E328 each coordinate Ca(2+). The 166-residue stretch at 415–580 folds into the Miro 2 domain; the sequence is RSVLMCKVLG…FTQLATMATF (166 aa). Residues G427, G429, K430, S431, and A432 each contribute to the GTP site. Mg(2+) is bound at residue S431. E475 is a Mg(2+) binding site. K529, D531, and C560 together coordinate GTP. Residues 597 to 619 form a helical; Anchor for type IV membrane protein membrane-spanning segment; the sequence is GVLVAVGTAVAAVLSFSLYRVLV. The Mitochondrial intermembrane segment spans residues 620–622; it reads KSR.

The protein belongs to the mitochondrial Rho GTPase family. Homodimer. Interacts with the kinesin-binding proteins TRAK1/OIP106 and TRAK2/GRIF1, forming a link between mitochondria and the trafficking apparatus of the microtubules. Interacts with ARMCX3. Found in a complex with KIF5B, OGT, RHOT1 and TRAK1. Ubiquitinated by PRKN in a PINK1-dependent manner, leading to its degradation.

The protein localises to the mitochondrion outer membrane. It catalyses the reaction GTP + H2O = GDP + phosphate + H(+). The catalysed reaction is ATP + H2O = ADP + phosphate + H(+). The enzyme catalyses UTP + H2O = UDP + phosphate + H(+). Functionally, atypical mitochondrial nucleoside-triphosphatase (NTPase) involved in mitochondrial trafficking. Probably involved in control of anterograde transport of mitochondria and their subcellular distribution. Can hydrolyze GTP, ATP and UTP. This is Mitochondrial Rho GTPase 2 (Rhot2) from Rattus norvegicus (Rat).